The primary structure comprises 130 residues: Galectin-2 (130 aa).

A Galectin domain is found at 4–130 (KFEVKDLNMK…GLQISSFKLE (127 aa)). 65–71 (WGQEQRE) contacts a beta-D-galactoside.

In terms of assembly, homodimer.

In terms of biological role, this protein binds beta-galactoside. Its physiological function is not yet known. The chain is Galectin-2 (Lgals2) from Mus musculus (Mouse).